Here is a 187-residue protein sequence, read N- to C-terminus: GTP cyclohydrolase 1 (187 aa).

Residues C81, H84, and C152 each contribute to the Zn(2+) site.

The protein belongs to the GTP cyclohydrolase I family. As to quaternary structure, homomer.

The enzyme catalyses GTP + H2O = 7,8-dihydroneopterin 3'-triphosphate + formate + H(+). Its pathway is cofactor biosynthesis; 7,8-dihydroneopterin triphosphate biosynthesis; 7,8-dihydroneopterin triphosphate from GTP: step 1/1. The sequence is that of GTP cyclohydrolase 1 from Pyrobaculum neutrophilum (strain DSM 2338 / JCM 9278 / NBRC 100436 / V24Sta) (Thermoproteus neutrophilus).